The primary structure comprises 351 residues: DNA polymerase IV (351 aa).

One can recognise a UmuC domain in the interval 4 to 185 (IIHVDMDCFF…LPLGKIPGVG (182 aa)). The Mg(2+) site is built by D8 and D103. The active site involves E104.

This sequence belongs to the DNA polymerase type-Y family. Monomer. Mg(2+) is required as a cofactor.

It is found in the cytoplasm. It carries out the reaction DNA(n) + a 2'-deoxyribonucleoside 5'-triphosphate = DNA(n+1) + diphosphate. Functionally, poorly processive, error-prone DNA polymerase involved in untargeted mutagenesis. Copies undamaged DNA at stalled replication forks, which arise in vivo from mismatched or misaligned primer ends. These misaligned primers can be extended by PolIV. Exhibits no 3'-5' exonuclease (proofreading) activity. May be involved in translesional synthesis, in conjunction with the beta clamp from PolIII. The polypeptide is DNA polymerase IV (Cronobacter sakazakii (strain ATCC BAA-894) (Enterobacter sakazakii)).